A 480-amino-acid chain; its full sequence is Glutamyl-tRNA(Gln) amidotransferase subunit A (480 aa).

Residues Lys-76 and Ser-151 each act as charge relay system in the active site. Ser-175 acts as the Acyl-ester intermediate in catalysis.

This sequence belongs to the amidase family. GatA subfamily. Heterotrimer of A, B and C subunits.

The enzyme catalyses L-glutamyl-tRNA(Gln) + L-glutamine + ATP + H2O = L-glutaminyl-tRNA(Gln) + L-glutamate + ADP + phosphate + H(+). Its function is as follows. Allows the formation of correctly charged Gln-tRNA(Gln) through the transamidation of misacylated Glu-tRNA(Gln) in organisms which lack glutaminyl-tRNA synthetase. The reaction takes place in the presence of glutamine and ATP through an activated gamma-phospho-Glu-tRNA(Gln). This is Glutamyl-tRNA(Gln) amidotransferase subunit A from Exiguobacterium sp. (strain ATCC BAA-1283 / AT1b).